We begin with the raw amino-acid sequence, 979 residues long: Oncostatin-M-specific receptor subunit beta (979 aa).

The signal sequence occupies residues Met-1–Ala-27. Residues Glu-28–Met-740 lie on the Extracellular side of the membrane. Asn-163 carries an N-linked (GlcNAc...) asparagine glycan. Cys-245 and Cys-255 are joined by a disulfide. N-linked (GlcNAc...) asparagine glycosylation is found at Asn-326 and Asn-380. 4 consecutive Fibronectin type-III domains span residues Asn-335–Ala-428, Ala-433–Asn-528, Lys-529–Leu-623, and Pro-625–Glu-736. Positions Trp-415–Ser-419 match the WSXWS motif motif. Asn-446 and Asn-580 each carry an N-linked (GlcNAc...) asparagine glycan. The helical transmembrane segment at Leu-741–Leu-761 threads the bilayer. The Cytoplasmic segment spans residues Lys-762–Cys-979. Positions Cys-770 to Tyr-778 match the Box 1 motif motif. Residues Ser-826 and Ser-889 each carry the phosphoserine modification.

Belongs to the type I cytokine receptor family. Type 2 subfamily. In terms of assembly, heterodimer composed of OSMR and IL6ST (type II OSM receptor). Heterodimer with IL31RA to form the IL31 receptor. Expressed in keratinocytes (at protein level). Expressed at relatively high levels in all neural cells as well as fibroblast and epithelial cells.

The protein resides in the membrane. Functionally, associates with IL31RA to form the IL31 receptor. Binds IL31 to activate STAT3 and possibly STAT1 and STAT5. Capable of transducing OSM-specific signaling events. This Homo sapiens (Human) protein is Oncostatin-M-specific receptor subunit beta (OSMR).